Reading from the N-terminus, the 168-residue chain is MANRNDSRNNRRNKDDIEDQLVAVNRITKVVKGGRRMRFAALVVVGDKKGRVGFGTGKAQEVPEAIRKAVEDGKKKMINVPKVGTTIPHEVIGHYGSGNILLKPAEAGSGVAAGGAVRIVMDMAGISDVTSKSLGSNTPINVVRATIDGLKKLRTSEEVSKLRQPERA.

The S5 DRBM domain occupies 17–80 (IEDQLVAVNR…EDGKKKMINV (64 aa)).

It belongs to the universal ribosomal protein uS5 family. Part of the 30S ribosomal subunit. Contacts proteins S4 and S8.

Functionally, with S4 and S12 plays an important role in translational accuracy. Located at the back of the 30S subunit body where it stabilizes the conformation of the head with respect to the body. This chain is Small ribosomal subunit protein uS5, found in Lactobacillus acidophilus (strain ATCC 700396 / NCK56 / N2 / NCFM).